The chain runs to 602 residues: MGAPDEVLNIAPDEGDKLRAKALAADAEELPAGYYTSPRVVCTFMSISLTLLSTYFAFEASAAAISFIIEDIGPSENVSLFSTVWTVSQSISILLMGRLTDRFGRRGFILGTNCVGIIGGIGCLYSFQRFNTMIGAQVLLGLAAGQPGACILFIGELMSNKTKFLGNVIVAFPNVIATGFGPYIGQSLGINGNWRWIFYIYIIITAVSTVLAFIFYHPPSFAQLHGKKISRRDELLKVDWIGAFFLTAGMTLFLLGVSWGGSPDPWDSPKILGLLISGIVSCVIFVLYECYAKIDRPIIPMEFFPGTFAGFGCMLLISGVMGSMNTALFIMYPQQVQHIFSSTLSSWQEVAWMSSTAGFGIWAGIVTLGSLFHIFRHIRWQLIFGSAWVTAFLGAMASVNRHKKSEAIAFSICTGFVIGWAEDVTMLLVQFISSDENLGVTFSVVSATRAICGSIFTAAFISLYTIKFPGQLQSKLVPAVPRRWGFPGVLLVAGFAYWRALTGQCPSYWLLFPGMTSNLIQVTNDAVADSYAAAYSYVYYFAMALGVIAIIASACTKDFDHYLTSHVPHQIYAAKDADVDLLDSDRSTENVSSAAVTVSEKE.

4 helical membrane passes run 49–69, 77–97, 107–127, and 134–154; these read LTLL…SFII, NVSL…LLMG, GFIL…LYSF, and IGAQ…ILFI. Asparagine 160 carries N-linked (GlcNAc...) asparagine glycosylation. A run of 11 helical transmembrane segments spans residues 164–184, 196–216, 240–260, 271–291, 297–317, 355–375, 380–400, 408–428, 450–470, 484–504, and 532–552; these read FLGN…GPYI, WIFY…FIFY, WIGA…VSWG, ILGL…YECY, PIIP…MLLI, STAG…FHIF, WQLI…ASVN, IAFS…TMLL, AICG…KFPG, WGFP…LTGQ, and AAAY…AIIA. The N-linked (GlcNAc...) asparagine glycan is linked to asparagine 590.

This sequence belongs to the major facilitator superfamily.

It is found in the cell membrane. Its function is as follows. Efflux pump that provides the dual role of trichothecene export and self-protection by allowing the fungus to evade the harmful effect of its own trichothecene production. The sequence is that of Trichothecene efflux pump TRI12 from Trichoderma arundinaceum.